Consider the following 331-residue polypeptide: Ketol-acid reductoisomerase (NADP(+)) (331 aa).

The KARI N-terminal Rossmann domain occupies 2–182 (ARLYYDADAN…GGTRAGILET (181 aa)). Residues 25–28 (YGSQ), S51, S53, and 83–86 (DEVQ) contribute to the NADP(+) site. H108 is an active-site residue. An NADP(+)-binding site is contributed by G134. Residues 183–328 (TFREETETDL…KDLRAMFSWL (146 aa)) form the KARI C-terminal knotted domain. The Mg(2+) site is built by D191, E195, E227, and E231. S252 lines the substrate pocket.

The protein belongs to the ketol-acid reductoisomerase family. The cofactor is Mg(2+).

It carries out the reaction (2R)-2,3-dihydroxy-3-methylbutanoate + NADP(+) = (2S)-2-acetolactate + NADPH + H(+). The catalysed reaction is (2R,3R)-2,3-dihydroxy-3-methylpentanoate + NADP(+) = (S)-2-ethyl-2-hydroxy-3-oxobutanoate + NADPH + H(+). It participates in amino-acid biosynthesis; L-isoleucine biosynthesis; L-isoleucine from 2-oxobutanoate: step 2/4. The protein operates within amino-acid biosynthesis; L-valine biosynthesis; L-valine from pyruvate: step 2/4. In terms of biological role, involved in the biosynthesis of branched-chain amino acids (BCAA). Catalyzes an alkyl-migration followed by a ketol-acid reduction of (S)-2-acetolactate (S2AL) to yield (R)-2,3-dihydroxy-isovalerate. In the isomerase reaction, S2AL is rearranged via a Mg-dependent methyl migration to produce 3-hydroxy-3-methyl-2-ketobutyrate (HMKB). In the reductase reaction, this 2-ketoacid undergoes a metal-dependent reduction by NADPH to yield (R)-2,3-dihydroxy-isovalerate. The sequence is that of Ketol-acid reductoisomerase (NADP(+)) from Cyanothece sp. (strain PCC 7425 / ATCC 29141).